The primary structure comprises 185 residues: Potassium-transporting ATPase KdpC subunit (185 aa).

The helical transmembrane segment at 14-34 threads the bilayer; sequence ALSLLTGVAYPLALTGIAAVI.

Belongs to the KdpC family. The system is composed of three essential subunits: KdpA, KdpB and KdpC.

The protein localises to the cell inner membrane. In terms of biological role, part of the high-affinity ATP-driven potassium transport (or Kdp) system, which catalyzes the hydrolysis of ATP coupled with the electrogenic transport of potassium into the cytoplasm. This subunit acts as a catalytic chaperone that increases the ATP-binding affinity of the ATP-hydrolyzing subunit KdpB by the formation of a transient KdpB/KdpC/ATP ternary complex. The polypeptide is Potassium-transporting ATPase KdpC subunit (Cereibacter sphaeroides (strain KD131 / KCTC 12085) (Rhodobacter sphaeroides)).